Reading from the N-terminus, the 98-residue chain is NADH-ubiquinone oxidoreductase chain 4L (98 aa).

3 helical membrane-spanning segments follow: residues 1–21 (MSLT…GLLM), 29–49 (SLLC…ITIL), and 61–81 (IILL…LVMV).

The protein belongs to the complex I subunit 4L family. In terms of assembly, core subunit of respiratory chain NADH dehydrogenase (Complex I) which is composed of 45 different subunits.

It localises to the mitochondrion inner membrane. The catalysed reaction is a ubiquinone + NADH + 5 H(+)(in) = a ubiquinol + NAD(+) + 4 H(+)(out). In terms of biological role, core subunit of the mitochondrial membrane respiratory chain NADH dehydrogenase (Complex I) which catalyzes electron transfer from NADH through the respiratory chain, using ubiquinone as an electron acceptor. Part of the enzyme membrane arm which is embedded in the lipid bilayer and involved in proton translocation. This is NADH-ubiquinone oxidoreductase chain 4L (MT-ND4L) from Artibeus jamaicensis (Jamaican fruit-eating bat).